Reading from the N-terminus, the 266-residue chain is MVKAKKQYGQNFLIDKSVLAKIIQAIPKEMNNIIEIGPGLGDLTQELLKISQVKAYEIDNDLIPILKKKFQKELECGKFNLIHQDASEAFNPSLDEKPYFLVANLPYYVASHIILKALEDKNCLGLIVMAQREMAEKFCAKEGNSEFSSLGVLSAMICERKILFDVDPQCFNPPPKVMSAVMSLIKTKDFDELCEIENFKNFLKDCFKAPRKQLLGNLKTYKAKVLEVLSTLGLKENIRPHEICVDLYLKIYDKLKDEYGRKQRDK.

Residues N11, L13, G37, E57, D85, and N104 each coordinate S-adenosyl-L-methionine.

This sequence belongs to the class I-like SAM-binding methyltransferase superfamily. rRNA adenine N(6)-methyltransferase family. RsmA subfamily.

Its subcellular location is the cytoplasm. It catalyses the reaction adenosine(1518)/adenosine(1519) in 16S rRNA + 4 S-adenosyl-L-methionine = N(6)-dimethyladenosine(1518)/N(6)-dimethyladenosine(1519) in 16S rRNA + 4 S-adenosyl-L-homocysteine + 4 H(+). Specifically dimethylates two adjacent adenosines (A1518 and A1519) in the loop of a conserved hairpin near the 3'-end of 16S rRNA in the 30S particle. May play a critical role in biogenesis of 30S subunits. This is Ribosomal RNA small subunit methyltransferase A from Campylobacter jejuni subsp. jejuni serotype O:2 (strain ATCC 700819 / NCTC 11168).